The following is a 316-amino-acid chain: L-lactate dehydrogenase (316 aa).

NAD(+) contacts are provided by residues V15, D37, K42, Y68, and 82–83 (GL). Residues Q85, R91, and 123–126 (NPVD) each bind substrate. NAD(+)-binding positions include 121 to 123 (ASN) and T146. 151-154 (DTSR) lines the substrate pocket. Beta-D-fructose 1,6-bisphosphate-binding residues include R156 and H171. The active-site Proton acceptor is the H178. Y222 is modified (phosphotyrosine). A substrate-binding site is contributed by T231.

It belongs to the LDH/MDH superfamily. LDH family. Homotetramer.

It localises to the cytoplasm. It catalyses the reaction (S)-lactate + NAD(+) = pyruvate + NADH + H(+). It participates in fermentation; pyruvate fermentation to lactate; (S)-lactate from pyruvate: step 1/1. Allosterically activated by fructose 1,6-bisphosphate (FBP). Its function is as follows. Catalyzes the conversion of lactate to pyruvate. In Borreliella afzelii (strain PKo) (Borrelia afzelii), this protein is L-lactate dehydrogenase.